The sequence spans 46 residues: Protein PsbN (46 aa).

The chain crosses the membrane as a helical span at residues G7 to Y27.

The protein belongs to the PsbN family.

It localises to the cellular thylakoid membrane. Functionally, may play a role in photosystem I and II biogenesis. The chain is Protein PsbN from Synechococcus elongatus (strain ATCC 33912 / PCC 7942 / FACHB-805) (Anacystis nidulans R2).